A 382-amino-acid chain; its full sequence is MLVVRADYKKYPIPVLEKMRIDEDEFYKKYDACVVVQTCNRIEAYFDTEVNSDLNCILNDFSGFDILKGKNATFHFLKVSCGMDSMILGENQILGQIKTSFQKARELKKTSRYLDSVFLKAIHVGQRARTETKINEGSVSIGSAAVELAEKNFGLANKNVLLIGAGEIGTLVAKALMEKHIKAVIVANRTYERAETLAKELKGMAVHFDKLKEAINFSDVIICATSSPHYILKKEDLIDVGNKIIIDIANPRDVDDAVREFENINLYTIDDLRNISDKNLQKRIEEVPAVEKIIDEEYDVLMKQIEKINVEEVLKDFNNYIEEIRTKELEKAIKLSKTKNPEEIMENFSKAFAKRITHDFVSYSINTSKEDLMNSAWWKNGK.

Substrate contacts are provided by residues 38–41 (TCNR), Ser-85, 90–92 (ENQ), and Gln-96. Cys-39 serves as the catalytic Nucleophile. Position 164–169 (164–169 (GAGEIG)) interacts with NADP(+).

The protein belongs to the glutamyl-tRNA reductase family. Homodimer.

It carries out the reaction (S)-4-amino-5-oxopentanoate + tRNA(Glu) + NADP(+) = L-glutamyl-tRNA(Glu) + NADPH + H(+). It participates in porphyrin-containing compound metabolism; protoporphyrin-IX biosynthesis; 5-aminolevulinate from L-glutamyl-tRNA(Glu): step 1/2. Catalyzes the NADPH-dependent reduction of glutamyl-tRNA(Glu) to glutamate 1-semialdehyde (GSA). The chain is Glutamyl-tRNA reductase from Methanococcus maripaludis (strain DSM 14266 / JCM 13030 / NBRC 101832 / S2 / LL).